A 109-amino-acid polypeptide reads, in one-letter code: MAASAARGAAALRRSINQPVAFVRRIPWTAASSQLKEHFAQFGHVRRCILPFDKETGFHRGLGWVQFSSEGGLRNALQQENHIIDGVKVQVHTRRPKLPQTSDDEKKDF.

Ser-15 is subject to Phosphoserine. The RRM domain occupies Pro-19–Asp-103. The residue at position 101 (Thr-101) is a Phosphothreonine. The residue at position 102 (Ser-102) is a Phosphoserine.

The protein resides in the mitochondrion. Its subcellular location is the nucleus. RNA-binding protein that acts as a nuclear receptor corepressor. Probably acts by binding the SRA RNA, and repressing the SRA-mediated nuclear receptor coactivation. Binds the STR7 loop of SRA RNA. Also able to repress glucocorticoid (GR), androgen (AR), thyroid (TR) and VDR-mediated transactivation. The chain is SRA stem-loop-interacting RNA-binding protein, mitochondrial (SLIRP) from Pongo abelii (Sumatran orangutan).